We begin with the raw amino-acid sequence, 244 residues long: Type III pantothenate kinase (244 aa).

6–13 (DVGNTRIK) is a binding site for ATP. Substrate-binding positions include Tyr-87 and 94–97 (GIDR). Catalysis depends on Asp-96, which acts as the Proton acceptor. Asp-117 is a K(+) binding site. An ATP-binding site is contributed by Thr-120. Substrate is bound at residue Thr-172.

It belongs to the type III pantothenate kinase family. In terms of assembly, homodimer. NH4(+) serves as cofactor. K(+) is required as a cofactor.

The protein resides in the cytoplasm. The enzyme catalyses (R)-pantothenate + ATP = (R)-4'-phosphopantothenate + ADP + H(+). Its pathway is cofactor biosynthesis; coenzyme A biosynthesis; CoA from (R)-pantothenate: step 1/5. Functionally, catalyzes the phosphorylation of pantothenate (Pan), the first step in CoA biosynthesis. This chain is Type III pantothenate kinase, found in Flavobacterium johnsoniae (strain ATCC 17061 / DSM 2064 / JCM 8514 / BCRC 14874 / CCUG 350202 / NBRC 14942 / NCIMB 11054 / UW101) (Cytophaga johnsonae).